The primary structure comprises 106 residues: UPF0060 membrane protein Oant_2511 (106 aa).

A run of 4 helical transmembrane segments spans residues Phe3–Trp23, Pro30–Ile50, Ala60–Ala80, and Arg84–Pro104.

The protein belongs to the UPF0060 family.

The protein resides in the cell inner membrane. This is UPF0060 membrane protein Oant_2511 from Brucella anthropi (strain ATCC 49188 / DSM 6882 / CCUG 24695 / JCM 21032 / LMG 3331 / NBRC 15819 / NCTC 12168 / Alc 37) (Ochrobactrum anthropi).